The sequence spans 132 residues: Agouti-signaling protein (132 aa).

Residues 1–22 (MDVTRLLLATLLVFLCFFTVYS) form the signal peptide. A glycan (N-linked (GlcNAc...) asparagine) is linked at asparagine 39. The disordered stretch occupies residues 61-87 (HISRKEAEKKRSSKKEASMKKVARPRT). The segment covering 64–79 (RKEAEKKRSSKKEASM) has biased composition (basic and acidic residues). 5 disulfides stabilise this stretch: cysteine 93–cysteine 108, cysteine 100–cysteine 114, cysteine 107–cysteine 125, cysteine 111–cysteine 132, and cysteine 116–cysteine 123. In terms of domain architecture, Agouti spans 93–132 (CVATRDSCKPPAPACCDPCASCQCRFFRSACSCRVLSLNC).

Its subcellular location is the secreted. In terms of biological role, involved in the regulation of melanogenesis. The binding of ASP to MC1R precludes alpha-MSH initiated signaling and thus blocks production of cAMP, leading to a down-regulation of eumelanogenesis (brown/black pigment) and thus increasing synthesis of pheomelanin (yellow/red pigment). The protein is Agouti-signaling protein (ASIP) of Colobus polykomos (Western black-and-white colobus monkey).